We begin with the raw amino-acid sequence, 565 residues long: UvrABC system protein C (565 aa).

Residues E12 to V89 form the GIY-YIG domain. The region spanning K195–I230 is the UVR domain.

This sequence belongs to the UvrC family. In terms of assembly, interacts with UvrB in an incision complex.

Its subcellular location is the cytoplasm. The UvrABC repair system catalyzes the recognition and processing of DNA lesions. UvrC both incises the 5' and 3' sides of the lesion. The N-terminal half is responsible for the 3' incision and the C-terminal half is responsible for the 5' incision. The polypeptide is UvrABC system protein C (Hydrogenobaculum sp. (strain Y04AAS1)).